We begin with the raw amino-acid sequence, 132 residues long: Small ribosomal subunit protein uS8 (132 aa).

It belongs to the universal ribosomal protein uS8 family. In terms of assembly, part of the 30S ribosomal subunit. Contacts proteins S5 and S12.

Functionally, one of the primary rRNA binding proteins, it binds directly to 16S rRNA central domain where it helps coordinate assembly of the platform of the 30S subunit. The polypeptide is Small ribosomal subunit protein uS8 (Alkaliphilus metalliredigens (strain QYMF)).